Here is a 323-residue protein sequence, read N- to C-terminus: Melanocortin receptor 3 (323 aa).

The Extracellular portion of the chain corresponds to 1 to 37; the sequence is MNSSCCLSSVSPMLPNLSEHPAAPPASNRSGSGFCEQ. Asn2, Asn16, and Asn28 each carry an N-linked (GlcNAc...) asparagine glycan. A helical transmembrane segment spans residues 38–63; the sequence is VFIKPEVFLALGIVSLMENILVILAV. The Cytoplasmic segment spans residues 64–75; the sequence is VRNGNLHSPMYF. The chain crosses the membrane as a helical span at residues 76–100; sequence FLCSLAAADMLVSLSNSLETIMIAV. Topologically, residues 101–118 are extracellular; the sequence is INSDSLTLEDQFIQHMDN. The chain crosses the membrane as a helical span at residues 119–140; the sequence is IFDSMICISLVASICNLLAIAI. At 141–160 the chain is on the cytoplasmic side; that stretch reads DRYVTIFYALRYHSIMTVRK. Residues 161-181 traverse the membrane as a helical segment; that stretch reads ALTLIGVIWVCCGICGVMFII. Over 182–186 the chain is Extracellular; sequence YSESK. Residues 187-210 form a helical membrane-spanning segment; the sequence is MVIVCLITMFFAMVLLMGTLYIHM. The Cytoplasmic segment spans residues 211–245; that stretch reads FLFARLHVQRIAVLPPAGVVAPQQHSCMKGAVTIT. The helical transmembrane segment at 246-268 threads the bilayer; the sequence is ILLGVFIFCWAPFFLHLVLIITC. The Extracellular segment spans residues 269 to 277; sequence PTNPYCICY. A helical transmembrane segment spans residues 278–301; that stretch reads TAHFNTYLVLIMCNSVIDPLIYAF. Residues 302–323 are Cytoplasmic-facing; that stretch reads RSLELRNTFKEILCGCNSMNLG. Cys315 carries S-palmitoyl cysteine lipidation.

The protein belongs to the G-protein coupled receptor 1 family. Brain.

Its subcellular location is the cell membrane. Its function is as follows. Receptor for MSH (alpha, beta and gamma) and ACTH. This receptor is mediated by G proteins which activate adenylate cyclase. Required for expression of anticipatory patterns of activity and wakefulness during periods of limited nutrient availability and for the normal regulation of circadian clock activity in the brain. The polypeptide is Melanocortin receptor 3 (Mc3r) (Mus musculus (Mouse)).